The chain runs to 185 residues: Ribosome-recycling factor (185 aa).

The protein belongs to the RRF family.

Its subcellular location is the cytoplasm. Its function is as follows. Responsible for the release of ribosomes from messenger RNA at the termination of protein biosynthesis. May increase the efficiency of translation by recycling ribosomes from one round of translation to another. The sequence is that of Ribosome-recycling factor from Bacillus anthracis (strain A0248).